Here is a 290-residue protein sequence, read N- to C-terminus: Probable endonuclease 4 (290 aa).

The Zn(2+) site is built by His-69, His-109, Glu-145, Asp-179, His-182, His-216, Asp-229, His-231, and Glu-261.

It belongs to the AP endonuclease 2 family. It depends on Zn(2+) as a cofactor.

It catalyses the reaction Endonucleolytic cleavage to 5'-phosphooligonucleotide end-products.. Endonuclease IV plays a role in DNA repair. It cleaves phosphodiester bonds at apurinic or apyrimidinic (AP) sites, generating a 3'-hydroxyl group and a 5'-terminal sugar phosphate. The protein is Probable endonuclease 4 of Chlorobium limicola (strain DSM 245 / NBRC 103803 / 6330).